Consider the following 455-residue polypeptide: T-box protein VegT-A (455 aa).

Disordered stretches follow at residues 21–40 (SNCA…SSQD), 229–262 (REQE…DSPE), and 295–346 (ANQG…EPSS). Positions 57–230 (LWSQFHQEGT…HNPFAKGFRE (174 aa)) form a DNA-binding region, T-box. Residues 229-241 (REQERSHKRDDVL) show a composition bias toward basic and acidic residues. Polar residues predominate over residues 308–324 (GANQEQQVPTSSSNFYN).

In terms of assembly, forms a repression complex on the promoters of the nodal/nr1 and siamois genes with the maternal factors tcf7l1/tcf3 and pouf5.1/oct-25. Interacts (via C-terminus) with tcf7l1/tcf3 (via N-terminus). Also interacts with the other POU-domain transcription factors pou5f1.2/oct-91 and pou5f1.3/oct-60. Uniformly distributed in stage I oocytes but becomes localized to the vegetal hemisphere by stage II and remains so thereafter throughout oogenesis and the early embryonic cleavage stages. Zygotic expression parallels blastopore formation and shifts from dorsal expression in the marginal zone of late blastula and early gastrula stages to a ventral/lateral expression at the posterior end of later stage embryos. Expression is excluded from the notochord. In tailbud and tadpole stages, expressed exclusively in a subset of posterior Rohon-Beard neurons.

Its subcellular location is the nucleus. Functionally, transcription factor required for both mesoderm and endoderm formation in the embryo; signaling determinants and concentration levels may determine which germ layer is formed. Acts together with beta-catenin to activate genes that are responsible for mesoderm induction including wnt-8, eomes t/bra, siamois, mix1 and sox17. Directly binds to promoter DNA. Patterns the mesoderm along the dorsoventral and posterior axis. Activates siamois gene transcription when alone or in combination with beta-catenin, but inhibits siamois transcription in combination with pou5f1.1/oct-25. The chain is T-box protein VegT-A (vegt-a) from Xenopus laevis (African clawed frog).